A 332-amino-acid chain; its full sequence is Ubiquinol oxidase 1a, mitochondrial (332 aa).

A mitochondrion-targeting transit peptide spans Met-1 to Met-54. The helical transmembrane segment at Ala-157–Leu-177 threads the bilayer. Residues Glu-161, Glu-200, and His-203 each contribute to the Fe cation site. Residues Ala-219–Ser-239 form a helical membrane-spanning segment. Fe cation is bound by residues Glu-251, Glu-302, and His-305.

Belongs to the alternative oxidase family. As to quaternary structure, homodimer; disulfide-linked. Fe cation is required as a cofactor. As to expression, expressed in roots, leaf sheaths and leaf blades.

Its subcellular location is the mitochondrion inner membrane. The enzyme catalyses 2 a ubiquinol + O2 = 2 a ubiquinone + 2 H2O. In terms of biological role, catalyzes the cyanide-resistant oxidation of ubiquinol and the reduction of molecular oxygen to water, but does not translocate protons and consequently is not linked to oxidative phosphorylation. May increase respiration when the cytochrome respiratory pathway is restricted, or in response to low temperatures. The protein is Ubiquinol oxidase 1a, mitochondrial of Oryza sativa subsp. japonica (Rice).